Consider the following 510-residue polypeptide: NAD(P)H-quinone oxidoreductase subunit 2 B, chloroplastic (510 aa).

A run of 12 helical transmembrane segments spans residues 24–44, 57–77, 99–119, 124–144, 183–203, 227–247, 295–315, 323–343, 347–367, 395–415, 418–438, and 484–504; these read LLLFHGSFIFPECILIFGLIL, IPWLYFISSTSLVMSITALLF, IFQFLILLCSTLCIPLSVEYI, MAITEFLLFVLTATLGGMFLC, YLLMGGASSSILVHGFSWLYG, PGISIALISITVGIGFKLSPA, WHLLLEILAILSMILGNLIAI, MLAYSSIGQIGYVIIGIIVGD, GYASMITYMLFYISMNLGTFA, ALSSALCLLSLGGLPPLAGFF, LHLFWCGWQAGLYFLVSIGLL, and MIVCVIASTIPGISMNPIIAI.

This sequence belongs to the complex I subunit 2 family. NDH is composed of at least 16 different subunits, 5 of which are encoded in the nucleus.

The protein resides in the plastid. It localises to the chloroplast thylakoid membrane. It carries out the reaction a plastoquinone + NADH + (n+1) H(+)(in) = a plastoquinol + NAD(+) + n H(+)(out). The catalysed reaction is a plastoquinone + NADPH + (n+1) H(+)(in) = a plastoquinol + NADP(+) + n H(+)(out). NDH shuttles electrons from NAD(P)H:plastoquinone, via FMN and iron-sulfur (Fe-S) centers, to quinones in the photosynthetic chain and possibly in a chloroplast respiratory chain. The immediate electron acceptor for the enzyme in this species is believed to be plastoquinone. Couples the redox reaction to proton translocation, and thus conserves the redox energy in a proton gradient. This Calycanthus floridus var. glaucus (Eastern sweetshrub) protein is NAD(P)H-quinone oxidoreductase subunit 2 B, chloroplastic.